A 95-amino-acid polypeptide reads, in one-letter code: Large ribosomal subunit protein bL25 (95 aa).

It belongs to the bacterial ribosomal protein bL25 family. In terms of assembly, part of the 50S ribosomal subunit; part of the 5S rRNA/L5/L18/L25 subcomplex. Contacts the 5S rRNA. Binds to the 5S rRNA independently of L5 and L18.

Its function is as follows. This is one of the proteins that binds to the 5S RNA in the ribosome where it forms part of the central protuberance. This chain is Large ribosomal subunit protein bL25, found in Haemophilus influenzae (strain 86-028NP).